A 336-amino-acid chain; its full sequence is Ferredoxin--NADP reductase (336 aa).

FAD contacts are provided by Thr18, Glu37, Gln45, Tyr50, Val92, Phe127, Asp290, and Ser331.

It belongs to the ferredoxin--NADP reductase type 2 family. In terms of assembly, homodimer. Requires FAD as cofactor.

The enzyme catalyses 2 reduced [2Fe-2S]-[ferredoxin] + NADP(+) + H(+) = 2 oxidized [2Fe-2S]-[ferredoxin] + NADPH. This chain is Ferredoxin--NADP reductase, found in Symbiobacterium thermophilum (strain DSM 24528 / JCM 14929 / IAM 14863 / T).